We begin with the raw amino-acid sequence, 234 residues long: Enolase-phosphatase E1 (234 aa).

Residues Asp-10 and Glu-12 each contribute to the Mg(2+) site. Substrate is bound by residues 125–126 and Lys-162; that span reads SS. Asp-188 provides a ligand contact to Mg(2+).

The protein belongs to the HAD-like hydrolase superfamily. MasA/MtnC family. As to quaternary structure, monomer. It depends on Mg(2+) as a cofactor.

The protein localises to the cytoplasm. It is found in the nucleus. It catalyses the reaction 5-methylsulfanyl-2,3-dioxopentyl phosphate + H2O = 1,2-dihydroxy-5-(methylsulfanyl)pent-1-en-3-one + phosphate. It functions in the pathway amino-acid biosynthesis; L-methionine biosynthesis via salvage pathway; L-methionine from S-methyl-5-thio-alpha-D-ribose 1-phosphate: step 3/6. Its pathway is amino-acid biosynthesis; L-methionine biosynthesis via salvage pathway; L-methionine from S-methyl-5-thio-alpha-D-ribose 1-phosphate: step 4/6. Its function is as follows. Bifunctional enzyme that catalyzes the enolization of 2,3-diketo-5-methylthiopentyl-1-phosphate (DK-MTP-1-P) into the intermediate 2-hydroxy-3-keto-5-methylthiopentenyl-1-phosphate (HK-MTPenyl-1-P), which is then dephosphorylated to form the acireductone 1,2-dihydroxy-3-keto-5-methylthiopentene (DHK-MTPene). The sequence is that of Enolase-phosphatase E1 from Sordaria macrospora (strain ATCC MYA-333 / DSM 997 / K(L3346) / K-hell).